The sequence spans 731 residues: MSLFLSNLSTNDSSLWKENHNSTDLLNPPGTLNIYLFCLTCLMTFAALVGSIYSLISLLKMQNRTVVSMLVASWSVDDLMSVLSVTIFMFLQWPNEVPGYFQFLCTTSALMYLCQGLSSNLKATLLVSYNFYTMHRGVGSQTASRRSGQVLGVVLTVWAASLLLSALPLCGWGAFVRTPWGCLVDCSSSYVLFLSIVYALAFGLLVGLSVPLTHRLLCSEEPPRLHSNYQEISRGASIPGTPPTAGRVVSLSPEDAPGPSLRRSGGCSPSSDTVFGPGAPAAAGAEACRRENRGTLYGTRSFTVSVAQKRFALILALTKVVLWLPMMMHMVVQNVVGFQSLPLETFSFLLTLLATTVTPVFVLSKRWTHLPCGCIINCRQNAYAVASDGKKIKRKGFEFNLSFQKSYGIYKIAHEDYYDDDENSIFYHNLMNSECETTKDPQRDNRNIFNAIKVEISTTPSLDSSTQRGINKCTNTDITEAKQDSNNKKDAFSDKTGGDINYEETTFSEGPERRLSHEESQKPDLSDWEWCRSKSERTPRQRSGYALAIPLCAFQGTVSLHAPTGKTLSLSTYEVSAEGQKITPASKKIEVYRSKSVGHEPNSEDSSSTFVDTSVKIHLEVLEICDNEEALDTVSIISNISQSSTQVRSPSLRYSRKENRFVSCDLGETASYSLFLPTSNPDGDINISIPDTVEAHRQNSKRQHQERDGYQEEIQLLNKAYRKREEESKGS.

At 1–35 (MSLFLSNLSTNDSSLWKENHNSTDLLNPPGTLNIY) the chain is on the extracellular side. 3 N-linked (GlcNAc...) asparagine glycosylation sites follow: Asn7, Asn11, and Asn21. A helical transmembrane segment spans residues 36 to 56 (LFCLTCLMTFAALVGSIYSLI). Topologically, residues 57-69 (SLLKMQNRTVVSM) are cytoplasmic. The chain crosses the membrane as a helical span at residues 70–90 (LVASWSVDDLMSVLSVTIFMF). Topologically, residues 91–109 (LQWPNEVPGYFQFLCTTSA) are extracellular. Cys105 and Cys182 are oxidised to a cystine. A helical membrane pass occupies residues 110–132 (LMYLCQGLSSNLKATLLVSYNFY). Topologically, residues 133–155 (TMHRGVGSQTASRRSGQVLGVVL) are cytoplasmic. A helical transmembrane segment spans residues 156 to 176 (TVWAASLLLSALPLCGWGAFV). The Extracellular portion of the chain corresponds to 177–189 (RTPWGCLVDCSSS). A helical membrane pass occupies residues 190 to 210 (YVLFLSIVYALAFGLLVGLSV). Over 211-310 (PLTHRLLCSE…SFTVSVAQKR (100 aa)) the chain is Cytoplasmic. Residues 234–271 (RGASIPGTPPTAGRVVSLSPEDAPGPSLRRSGGCSPSS) form a disordered region. A helical membrane pass occupies residues 311-331 (FALILALTKVVLWLPMMMHMV). Topologically, residues 332 to 342 (VQNVVGFQSLP) are extracellular. The helical transmembrane segment at 343 to 363 (LETFSFLLTLLATTVTPVFVL) threads the bilayer. At 364 to 731 (SKRWTHLPCG…RKREEESKGS (368 aa)) the chain is on the cytoplasmic side. Residues 475–526 (NTDITEAKQDSNNKKDAFSDKTGGDINYEETTFSEGPERRLSHEESQKPDLS) form a disordered region. Composition is skewed to basic and acidic residues over residues 479–497 (TEAK…DKTG) and 510–526 (GPER…PDLS).

Belongs to the G-protein coupled receptor 1 family.

Its subcellular location is the cell membrane. Its function is as follows. Orphan receptor. The sequence is that of Probable G-protein coupled receptor 149 (GPR149) from Homo sapiens (Human).